A 310-amino-acid chain; its full sequence is tRNA dimethylallyltransferase (310 aa).

Position 14–21 (14–21 (GPTASGKT)) interacts with ATP. 16-21 (TASGKT) contributes to the substrate binding site. 3 interaction with substrate tRNA regions span residues 39–42 (DSAL), 163–167 (QRLSR), and 244–249 (RCVGYR).

Belongs to the IPP transferase family. In terms of assembly, monomer. Mg(2+) serves as cofactor.

It catalyses the reaction adenosine(37) in tRNA + dimethylallyl diphosphate = N(6)-dimethylallyladenosine(37) in tRNA + diphosphate. Catalyzes the transfer of a dimethylallyl group onto the adenine at position 37 in tRNAs that read codons beginning with uridine, leading to the formation of N6-(dimethylallyl)adenosine (i(6)A). The sequence is that of tRNA dimethylallyltransferase from Aeromonas salmonicida (strain A449).